The sequence spans 365 residues: N-acetylgalactosamine-N,N'-diacetylbacillosaminyl-diphospho-undecaprenol 4-alpha-N-acetylgalactosaminyltransferase (365 aa).

The protein belongs to the glycosyltransferase group 1 family.

The protein resides in the cell inner membrane. The catalysed reaction is N-acetyl-alpha-D-galactosaminyl-(1-&gt;3)-N,N'-diacetyl-alpha-D-bacillosaminyl-tri-trans,hepta-cis-undecaprenyl diphosphate + UDP-N-acetyl-alpha-D-galactosamine = N-acetyl-alpha-D-galactosaminyl-(1-&gt;4)-N-acetyl-alpha-D-galactosaminyl-(1-&gt;3)-N,N'-diacetyl-alpha-D-bacillosaminyl-tri-trans,heptacis-undecaprenyl diphosphate + UDP + H(+). It participates in protein modification; protein glycosylation. Adds a GalNAc residue on to the Und-PP-Bac2,4diNAc-GalNAc disaccharide in the N-linked protein glycosylation pathway. Transfers the third sugar in the heptasaccharide biosynthesis. The sequence is that of N-acetylgalactosamine-N,N'-diacetylbacillosaminyl-diphospho-undecaprenol 4-alpha-N-acetylgalactosaminyltransferase (pglJ) from Campylobacter jejuni subsp. jejuni serotype O:2 (strain ATCC 700819 / NCTC 11168).